The following is a 619-amino-acid chain: Very-long-chain aldehyde decarbonylase GL1-4 (619 aa).

5 helical membrane passes run 45 to 65 (IAFS…QIWI), 94 to 114 (GWDD…LAMP), 126 to 146 (GAVV…YWFH), 178 to 198 (FAEH…TIYL), and 325 to 345 (AWYM…AWIY). Residues 138-272 (VEFLYYWFHR…MPFYDYIYNT (135 aa)) enclose the Fatty acid hydroxylase domain.

Belongs to the sterol desaturase family. As to quaternary structure, homodimer.

Its subcellular location is the endoplasmic reticulum membrane. The enzyme catalyses a long-chain fatty aldehyde + 2 NADPH + O2 + H(+) = a long-chain alkane + formate + 2 NADP(+) + H2O. Aldehyde decarbonylase involved in the conversion of aldehydes to alkanes. Core component of a very-long-chain alkane synthesis complex. In Oryza sativa subsp. indica (Rice), this protein is Very-long-chain aldehyde decarbonylase GL1-4.